The chain runs to 795 residues: Phenylalanine--tRNA ligase beta subunit (795 aa).

The tRNA-binding domain maps to 39 to 148 (AGTFNGVKVG…IDAPIGMDFR (110 aa)). In terms of domain architecture, B5 spans 401–476 (PKPNKVALRR…RIYGYDNIPN (76 aa)). Mg(2+) is bound by residues aspartate 454, aspartate 460, glutamate 463, and glutamate 464. Residues 701-794 (SKFPANRRDI…VSEKFGASLR (94 aa)) enclose the FDX-ACB domain.

The protein belongs to the phenylalanyl-tRNA synthetase beta subunit family. Type 1 subfamily. As to quaternary structure, tetramer of two alpha and two beta subunits. Mg(2+) is required as a cofactor.

Its subcellular location is the cytoplasm. The catalysed reaction is tRNA(Phe) + L-phenylalanine + ATP = L-phenylalanyl-tRNA(Phe) + AMP + diphosphate + H(+). The chain is Phenylalanine--tRNA ligase beta subunit from Vibrio vulnificus (strain YJ016).